We begin with the raw amino-acid sequence, 475 residues long: Ribulose bisphosphate carboxylase large chain (475 aa).

Residues 1–2 (MS) constitute a propeptide that is removed on maturation. Proline 3 bears the N-acetylproline mark. Lysine 14 carries the post-translational modification N6,N6,N6-trimethyllysine. Residues asparagine 123 and threonine 173 each contribute to the substrate site. Lysine 175 serves as the catalytic Proton acceptor. Residue lysine 177 coordinates substrate. Mg(2+) contacts are provided by lysine 201, aspartate 203, and glutamate 204. At lysine 201 the chain carries N6-carboxylysine. Histidine 294 functions as the Proton acceptor in the catalytic mechanism. Positions 295, 327, and 379 each coordinate substrate.

It belongs to the RuBisCO large chain family. Type I subfamily. Heterohexadecamer of 8 large chains and 8 small chains; disulfide-linked. The disulfide link is formed within the large subunit homodimers. It depends on Mg(2+) as a cofactor. Post-translationally, the disulfide bond which can form in the large chain dimeric partners within the hexadecamer appears to be associated with oxidative stress and protein turnover.

The protein resides in the plastid. It is found in the chloroplast. It catalyses the reaction 2 (2R)-3-phosphoglycerate + 2 H(+) = D-ribulose 1,5-bisphosphate + CO2 + H2O. It carries out the reaction D-ribulose 1,5-bisphosphate + O2 = 2-phosphoglycolate + (2R)-3-phosphoglycerate + 2 H(+). In terms of biological role, ruBisCO catalyzes two reactions: the carboxylation of D-ribulose 1,5-bisphosphate, the primary event in carbon dioxide fixation, as well as the oxidative fragmentation of the pentose substrate in the photorespiration process. Both reactions occur simultaneously and in competition at the same active site. The chain is Ribulose bisphosphate carboxylase large chain from Tsuga heterophylla (Western hemlock).